The sequence spans 198 residues: Segregation and condensation protein B (198 aa).

The tract at residues 169 to 198 (LADPAAEEPDQNEMDLFFDRFNQSKEQEEE) is disordered.

Belongs to the ScpB family. Homodimer. Homodimerization may be required to stabilize the binding of ScpA to the Smc head domains. Component of a cohesin-like complex composed of ScpA, ScpB and the Smc homodimer, in which ScpA and ScpB bind to the head domain of Smc. The presence of the three proteins is required for the association of the complex with DNA.

Its subcellular location is the cytoplasm. Functionally, participates in chromosomal partition during cell division. May act via the formation of a condensin-like complex containing Smc and ScpA that pull DNA away from mid-cell into both cell halves. This is Segregation and condensation protein B from Listeria monocytogenes serotype 4a (strain HCC23).